A 265-amino-acid chain; its full sequence is Anamorsin homolog (265 aa).

The interval 1 to 147 (MDAAKMYGAV…WKIGSSFALK (147 aa)) is N-terminal SAM-like domain. The linker stretch occupies residues 147–176 (KKVVKSSPKVQIDFDSDLIDENSLLSEEDL). [2Fe-2S] cluster is bound by residues Cys186, Cys195, Cys198, and Cys200. A fe-S binding site A region spans residues 186-200 (CEIGPTRKACKNCSC). Positions 226, 229, 237, and 240 each coordinate [4Fe-4S] cluster. 2 short sequence motifs (cx2C motif) span residues 226 to 229 (CGSC) and 237 to 240 (CSTC). The segment at 226–240 (CGSCGLGDAFRCSTC) is fe-S binding site B.

The protein belongs to the anamorsin family. As to quaternary structure, monomer. It depends on [2Fe-2S] cluster as a cofactor. The cofactor is [4Fe-4S] cluster.

It is found in the cytoplasm. It localises to the mitochondrion intermembrane space. Its function is as follows. Component of the cytosolic iron-sulfur (Fe-S) protein assembly (CIA) machinery. Required for the maturation of extramitochondrial Fe-S proteins. Part of an electron transfer chain functioning in an early step of cytosolic Fe-S biogenesis, facilitating the de novo assembly of a [4Fe-4S] cluster on the cytosolic Fe-S scaffold complex. Electrons are transferred from NADPH via a FAD- and FMN-containing diflavin oxidoreductase. Together with the diflavin oxidoreductase, also required for the assembly of the diferric tyrosyl radical cofactor of ribonucleotide reductase (RNR), probably by providing electrons for reduction during radical cofactor maturation in the catalytic small subunit. This Medicago truncatula (Barrel medic) protein is Anamorsin homolog.